The primary structure comprises 365 residues: Cobalt-precorrin-5B C(1)-methyltransferase (365 aa).

Belongs to the CbiD family.

The catalysed reaction is Co-precorrin-5B + S-adenosyl-L-methionine = Co-precorrin-6A + S-adenosyl-L-homocysteine. It participates in cofactor biosynthesis; adenosylcobalamin biosynthesis; cob(II)yrinate a,c-diamide from sirohydrochlorin (anaerobic route): step 6/10. Catalyzes the methylation of C-1 in cobalt-precorrin-5B to form cobalt-precorrin-6A. This Methanococcus maripaludis (strain C5 / ATCC BAA-1333) protein is Cobalt-precorrin-5B C(1)-methyltransferase.